The chain runs to 430 residues: tRNA(Ile)-lysidine synthase (430 aa).

27–32 (SGGSDS) serves as a coordination point for ATP.

Belongs to the tRNA(Ile)-lysidine synthase family.

It is found in the cytoplasm. The enzyme catalyses cytidine(34) in tRNA(Ile2) + L-lysine + ATP = lysidine(34) in tRNA(Ile2) + AMP + diphosphate + H(+). Ligates lysine onto the cytidine present at position 34 of the AUA codon-specific tRNA(Ile) that contains the anticodon CAU, in an ATP-dependent manner. Cytidine is converted to lysidine, thus changing the amino acid specificity of the tRNA from methionine to isoleucine. This is tRNA(Ile)-lysidine synthase from Rickettsia prowazekii (strain Madrid E).